Consider the following 345-residue polypeptide: Tryptophan--tRNA ligase (345 aa).

Residues 22–24 and 30–31 contribute to the ATP site; these read QPS and GN. Positions 23 to 31 match the 'HIGH' region motif; the sequence is PSGELTIGN. D146 contributes to the L-tryptophan binding site. ATP-binding positions include 158–160, V197, and 206–210; these read GID and KMSKS. The 'KMSKS' region signature appears at 206 to 210; the sequence is KMSKS.

This sequence belongs to the class-I aminoacyl-tRNA synthetase family. In terms of assembly, homodimer.

The protein localises to the cytoplasm. It carries out the reaction tRNA(Trp) + L-tryptophan + ATP = L-tryptophyl-tRNA(Trp) + AMP + diphosphate + H(+). Catalyzes the attachment of tryptophan to tRNA(Trp). The polypeptide is Tryptophan--tRNA ligase (Photorhabdus laumondii subsp. laumondii (strain DSM 15139 / CIP 105565 / TT01) (Photorhabdus luminescens subsp. laumondii)).